Consider the following 346-residue polypeptide: Uroporphyrinogen decarboxylase (346 aa).

Substrate is bound by residues R23 to R27, D72, Y155, S209, and H322.

It belongs to the uroporphyrinogen decarboxylase family. As to quaternary structure, homodimer.

It is found in the cytoplasm. It catalyses the reaction uroporphyrinogen III + 4 H(+) = coproporphyrinogen III + 4 CO2. It functions in the pathway porphyrin-containing compound metabolism; protoporphyrin-IX biosynthesis; coproporphyrinogen-III from 5-aminolevulinate: step 4/4. In terms of biological role, catalyzes the decarboxylation of four acetate groups of uroporphyrinogen-III to yield coproporphyrinogen-III. This is Uroporphyrinogen decarboxylase from Anaeromyxobacter sp. (strain Fw109-5).